A 352-amino-acid chain; its full sequence is Uroporphyrinogen decarboxylase (352 aa).

Substrate-binding positions include R26–R30, D76, Y153, S208, and H323.

This sequence belongs to the uroporphyrinogen decarboxylase family. In terms of assembly, homodimer.

Its subcellular location is the cytoplasm. It carries out the reaction uroporphyrinogen III + 4 H(+) = coproporphyrinogen III + 4 CO2. Its pathway is porphyrin-containing compound metabolism; protoporphyrin-IX biosynthesis; coproporphyrinogen-III from 5-aminolevulinate: step 4/4. Its function is as follows. Catalyzes the decarboxylation of four acetate groups of uroporphyrinogen-III to yield coproporphyrinogen-III. This Prochlorococcus marinus (strain NATL2A) protein is Uroporphyrinogen decarboxylase.